The primary structure comprises 159 residues: Ribosome maturation factor RimP (159 aa).

This sequence belongs to the RimP family.

The protein resides in the cytoplasm. In terms of biological role, required for maturation of 30S ribosomal subunits. This chain is Ribosome maturation factor RimP, found in Streptococcus pneumoniae serotype 2 (strain D39 / NCTC 7466).